The following is a 229-amino-acid chain: uncharacterized protein (229 aa).

Residues 2 to 69 form the S4 RNA-binding domain; it reads QRLAKIISNA…KPRLWIYYKP (68 aa). Catalysis depends on Asp-102, which acts as the Nucleophile.

The protein belongs to the pseudouridine synthase RsuA family.

It catalyses the reaction a uridine in RNA = a pseudouridine in RNA. This is an uncharacterized protein from Rickettsia felis (strain ATCC VR-1525 / URRWXCal2) (Rickettsia azadi).